The primary structure comprises 380 residues: MIISSPNDYRAAAKSRLPPFLFHYVDGGAYAEYTLRRNVEDLSHIALRQQVLRNVADLSLETELFGQKLTMPVALAPVGLTGMLARRGEVQAAKAAQAKGVPFTLSTVSVCPIEEVQSQCAKPIWFQLYVLKDRGFMRNALERAQAAGINTLIFTVDMPVPGARYRDAHSGMSGRSGPTRRVLQAMVHPRWALDVGLLGKPHDLGNISTYRGKPTNLADYIGWLAANFDPSISWKDLEWIRSFWKGPMIIKGILDPVDARDAVAFGADGIVVSNHGGRQLDGVLSSARALPAIADAVGDDLTVLADSGIRTGLDVVRMLALGAKGVLLGRAFAYALATHGQAGVANLLDLIEKEMRVAMALTGARSIAEITRDSLVGLPR.

Positions 1 to 380 (MIISSPNDYR…TRDSLVGLPR (380 aa)) constitute an FMN hydroxy acid dehydrogenase domain. Tyr24 serves as a coordination point for substrate. FMN-binding residues include Ser106 and Gln127. Tyr129 serves as a coordination point for substrate. Thr155 contacts FMN. Arg164 is a binding site for substrate. Lys251 lines the FMN pocket. His275 serves as the catalytic Proton acceptor. Arg278 is a binding site for substrate. FMN is bound at residue 306-330 (DSGIRTGLDVVRMLALGAKGVLLGR).

This sequence belongs to the FMN-dependent alpha-hydroxy acid dehydrogenase family. The cofactor is FMN.

Its subcellular location is the cell inner membrane. It carries out the reaction (S)-lactate + A = pyruvate + AH2. Its function is as follows. Catalyzes the conversion of L-lactate to pyruvate. Is coupled to the respiratory chain. In Azorhizobium caulinodans (strain ATCC 43989 / DSM 5975 / JCM 20966 / LMG 6465 / NBRC 14845 / NCIMB 13405 / ORS 571), this protein is L-lactate dehydrogenase.